The following is a 142-amino-acid chain: Large ribosomal subunit protein uL11 (142 aa).

It belongs to the universal ribosomal protein uL11 family. Part of the ribosomal stalk of the 50S ribosomal subunit. Interacts with L10 and the large rRNA to form the base of the stalk. L10 forms an elongated spine to which L12 dimers bind in a sequential fashion forming a multimeric L10(L12)X complex. In terms of processing, one or more lysine residues are methylated.

Forms part of the ribosomal stalk which helps the ribosome interact with GTP-bound translation factors. In Mycobacteroides abscessus (strain ATCC 19977 / DSM 44196 / CCUG 20993 / CIP 104536 / JCM 13569 / NCTC 13031 / TMC 1543 / L948) (Mycobacterium abscessus), this protein is Large ribosomal subunit protein uL11.